A 210-amino-acid chain; its full sequence is FMN-dependent NADH:quinone oxidoreductase (210 aa).

Residues Ser-10 and 16–18 each bind FMN; that span reads SRS.

Belongs to the azoreductase type 1 family. Homodimer. FMN is required as a cofactor.

The catalysed reaction is 2 a quinone + NADH + H(+) = 2 a 1,4-benzosemiquinone + NAD(+). It carries out the reaction N,N-dimethyl-1,4-phenylenediamine + anthranilate + 2 NAD(+) = 2-(4-dimethylaminophenyl)diazenylbenzoate + 2 NADH + 2 H(+). Its function is as follows. Quinone reductase that provides resistance to thiol-specific stress caused by electrophilic quinones. Also exhibits azoreductase activity. Catalyzes the reductive cleavage of the azo bond in aromatic azo compounds to the corresponding amines. In Kineococcus radiotolerans (strain ATCC BAA-149 / DSM 14245 / SRS30216), this protein is FMN-dependent NADH:quinone oxidoreductase.